Consider the following 128-residue polypeptide: MTHQHLLTMFNLLPVGXNISTWWNFGSMLLSCLTIQIITGFFLAIHYTANINMAFSSIMHISRDVPYGWIMQNTHAIGXSLFFICIYIHIARGIYYGSYLNKEVWLSGTTLLITLMATASXXMCYHDT.

3 helical membrane-spanning segments follow: residues 25–45 (FGSM…FLAI), 69–90 (WIMQ…YIHI), and 105–125 (WLSG…XMCY). Histidine 75 and histidine 89 together coordinate heme b. Histidine 126 is a binding site for a ubiquinone.

Belongs to the cytochrome b family. In terms of assembly, the cytochrome bc1 complex contains 3 respiratory subunits (MT-CYB, CYC1 and UQCRFS1), 2 core proteins (UQCRC1 and UQCRC2) and probably 6 low-molecular weight proteins. Heme b serves as cofactor.

The protein localises to the mitochondrion inner membrane. Its function is as follows. Component of the ubiquinol-cytochrome c reductase complex (complex III or cytochrome b-c1 complex) that is part of the mitochondrial respiratory chain. The b-c1 complex mediates electron transfer from ubiquinol to cytochrome c. Contributes to the generation of a proton gradient across the mitochondrial membrane that is then used for ATP synthesis. The protein is Cytochrome b (MT-CYB) of Crotalus viridis viridis (Prairie rattlesnake).